Consider the following 193-residue polypeptide: Probable GTP-binding protein EngB (193 aa).

Residues 22–193 enclose the EngB-type G domain; that stretch reads GLPEFAFAGR…LIAVLESYLA (172 aa). Residues 30–37, 57–61, 75–78, 142–145, and 173–175 each bind GTP; these read GRSNVGKS, GKTQG, DLPG, TKID, and FSS. Residues S37 and T59 each contribute to the Mg(2+) site.

The protein belongs to the TRAFAC class TrmE-Era-EngA-EngB-Septin-like GTPase superfamily. EngB GTPase family. The cofactor is Mg(2+).

Functionally, necessary for normal cell division and for the maintenance of normal septation. This chain is Probable GTP-binding protein EngB, found in Desulfotalea psychrophila (strain LSv54 / DSM 12343).